The primary structure comprises 134 residues: ATP synthase epsilon chain (134 aa).

This sequence belongs to the ATPase epsilon chain family. As to quaternary structure, F-type ATPases have 2 components, CF(1) - the catalytic core - and CF(0) - the membrane proton channel. CF(1) has five subunits: alpha(3), beta(3), gamma(1), delta(1), epsilon(1). CF(0) has three main subunits: a, b and c.

It localises to the cell membrane. Produces ATP from ADP in the presence of a proton gradient across the membrane. This is ATP synthase epsilon chain from Staphylococcus saprophyticus subsp. saprophyticus (strain ATCC 15305 / DSM 20229 / NCIMB 8711 / NCTC 7292 / S-41).